The primary structure comprises 446 residues: Argininosuccinate lyase (446 aa).

This sequence belongs to the lyase 1 family. Argininosuccinate lyase subfamily.

It is found in the cytoplasm. It carries out the reaction 2-(N(omega)-L-arginino)succinate = fumarate + L-arginine. The protein operates within amino-acid biosynthesis; L-arginine biosynthesis; L-arginine from L-ornithine and carbamoyl phosphate: step 3/3. This Bacteroides thetaiotaomicron (strain ATCC 29148 / DSM 2079 / JCM 5827 / CCUG 10774 / NCTC 10582 / VPI-5482 / E50) protein is Argininosuccinate lyase.